A 501-amino-acid polypeptide reads, in one-letter code: MRSSLAPGVWFLRAFSRDSWFRGFILLLTFLIYACYHMSRKPISIVKSRLHQNCSEMVRPVNDTHDLNDTTWCSWSPFDKDDYKELLGAVDNAFLVAYAIGMFISGIFGERLPLRYYLSAGMVLSGLFTSLFGLGYFWNIHMLWYFVLIQICNGLVQTTGWPSVVTCVGNWFGKGKRGFIMGIWNSHTSVGNILGSLIAGVWVNQHWGLSFIVPGIITAIMGVITFLFLIEYPEDVDCTPPRHHDDPEKEQDNPEDPVNSPYSSRESNVDIAASSSKEQGPEPEAISFLGALRIPGVIEFSLCLLFAKLVSYTFLYWLPLYIFNVAHFSAKEAGDLSTLFDVGGIIGGIMAGLISDYTNSRATTCCIMLILAAPMMFLYNYIGQNGITSSIVMLIICGVLVNGPYALITTAVSADLGTHESLKGNAKALSTVTAIIDGTGSIGAALGPLLAGLISPTGWNNVFYMLISADVLACLLLCRLVYKEILAWKTACGRSSGYKQI.

The chain crosses the membrane as a helical span at residues 19-39 (SWFRGFILLLTFLIYACYHMS). N53, N62, and N68 each carry an N-linked (GlcNAc...) asparagine glycan. The next 5 helical transmembrane spans lie at 88 to 108 (GAVD…SGIF), 118 to 140 (LSAG…FWNI), 142 to 164 (MLWY…WPSV), 179 to 199 (FIMG…SLIA), and 210 to 230 (SFIV…LFLI). Positions 240–252 (PPRHHDDPEKEQD) are enriched in basic and acidic residues. The disordered stretch occupies residues 240-266 (PPRHHDDPEKEQDNPEDPVNSPYSSRE). The next 6 membrane-spanning stretches (helical) occupy residues 303–323 (CLLF…LYIF), 334–354 (GDLS…AGLI), 362–382 (ATTC…YNYI), 391–411 (IVML…ITTA), 434–454 (AIID…AGLI), and 462–482 (VFYM…RLVY).

Belongs to the major facilitator superfamily. Organophosphate:Pi antiporter (OPA) (TC 2.A.1.4) family. In terms of tissue distribution, highly expressed in bone marrow derived macrophages, and weakly in spleen.

It localises to the endoplasmic reticulum membrane. The enzyme catalyses D-glucose 6-phosphate(in) + phosphate(out) = D-glucose 6-phosphate(out) + phosphate(in). Inhibited by vanadate but not by chlorogenic acid. In terms of biological role, inorganic phosphate and glucose-6-phosphate antiporter. May transport cytoplasmic glucose-6-phosphate into the lumen of the endoplasmic reticulum and translocate inorganic phosphate into the opposite direction. Independent of a lumenal glucose-6-phosphatase. May not play a role in homeostatic regulation of blood glucose levels. The protein is Glucose-6-phosphate exchanger SLC37A2 of Mus musculus (Mouse).